We begin with the raw amino-acid sequence, 483 residues long: MSKSKEKYSQLRSFIPEMRRVKHIYFVGIGGAGMGGIAEVLVNEGYRLSGSDIAENAVTERLKSLGVQIHIGHHADQVHGTDVVVVSTAIDAENPELVAAKELRIPVVQRAEMLAELMRYRHGVAVAGTHGKTTTTSLIASIYAQADRDPTFVIGGLLNSAGTNARLGNSRYLIAEADESDASFLHLQPMVSVVTNIEADHMDTYGGDFEKLKSTFIDFLHNLPFYGVAVMCIDDPVVRELLPKVGRKIVTYGFSEDADIQALNFVQQGYSSHFTLRRDGVEDIAVMVNLPGEHNVLNALASIAVATEDEIEDEAIVLALAQFEGIGRRFQQLGTFATSKGEVMLVDDYGHHPSEVAATIKAARLGWPDKRLVMIYQPHRYSRTRDLYDDFVEVLSQVDCLILLDVYSAGEAPVPGADSRALCRSIRQRGQLDPIFVAGTEQLLSLLPDVLQDGDLLLTQGAGNIGTLSKLIAQTNLGFEVVS.

Gly128–Thr134 contacts ATP.

It belongs to the MurCDEF family.

It is found in the cytoplasm. The enzyme catalyses UDP-N-acetyl-alpha-D-muramate + L-alanine + ATP = UDP-N-acetyl-alpha-D-muramoyl-L-alanine + ADP + phosphate + H(+). It participates in cell wall biogenesis; peptidoglycan biosynthesis. Its function is as follows. Cell wall formation. The chain is UDP-N-acetylmuramate--L-alanine ligase from Shewanella violacea (strain JCM 10179 / CIP 106290 / LMG 19151 / DSS12).